The primary structure comprises 155 residues: Ribosomal RNA large subunit methyltransferase H (155 aa).

S-adenosyl-L-methionine contacts are provided by residues Leu73, Gly104, and 123 to 128; that span reads LSRMTF.

It belongs to the RNA methyltransferase RlmH family. In terms of assembly, homodimer.

The protein resides in the cytoplasm. The catalysed reaction is pseudouridine(1915) in 23S rRNA + S-adenosyl-L-methionine = N(3)-methylpseudouridine(1915) in 23S rRNA + S-adenosyl-L-homocysteine + H(+). Specifically methylates the pseudouridine at position 1915 (m3Psi1915) in 23S rRNA. This chain is Ribosomal RNA large subunit methyltransferase H, found in Methylococcus capsulatus (strain ATCC 33009 / NCIMB 11132 / Bath).